The following is a 102-amino-acid chain: Small ribosomal subunit protein uS10 (102 aa).

This sequence belongs to the universal ribosomal protein uS10 family. In terms of assembly, part of the 30S ribosomal subunit.

In terms of biological role, involved in the binding of tRNA to the ribosomes. This Bartonella henselae (strain ATCC 49882 / DSM 28221 / CCUG 30454 / Houston 1) (Rochalimaea henselae) protein is Small ribosomal subunit protein uS10.